The following is a 91-amino-acid chain: Progonadoliberin-1 (91 aa).

The first 23 residues, 1–23, serve as a signal peptide directing secretion; that stretch reads MEPIPKLLAGLLLLTLCVVGCSS. Residue Gln-24 is modified to Pyrrolidone carboxylic acid. The residue at position 33 (Gly-33) is a Glycine amide.

It belongs to the GnRH family. The precursor is cleaved by ACE, which removes the Gly-Lys-Arg peptide at the C-terminus, leading to mature hormone. The mature form of Gonadoliberin-1 is also cleaved and degraded by ACE.

It localises to the secreted. Stimulates the secretion of gonadotropins; it stimulates the secretion of both luteinizing and follicle-stimulating hormones. The chain is Progonadoliberin-1 (GNRH1) from Sus scrofa (Pig).